Consider the following 171-residue polypeptide: Cytochrome c-type biogenesis protein CcmE (171 aa).

The Cytoplasmic portion of the chain corresponds to 1–7 (MNRKQKR). The helical; Signal-anchor for type II membrane protein transmembrane segment at 8–28 (LAVIAGGMGFIAAAVLLVMFA) threads the bilayer. Over 29-171 (FSQSVAYFYM…NPGEEAKATQ (143 aa)) the chain is Periplasmic. 2 residues coordinate heme: His-124 and Tyr-128. Residues 132-171 (DVADRLKQQGLWKEGQGGQESPGKEGQGQENPGEEAKATQ) form a disordered region.

It belongs to the CcmE/CycJ family.

It localises to the cell inner membrane. In terms of biological role, heme chaperone required for the biogenesis of c-type cytochromes. Transiently binds heme delivered by CcmC and transfers the heme to apo-cytochromes in a process facilitated by CcmF and CcmH. This Rhizobium leguminosarum bv. trifolii (strain WSM2304) protein is Cytochrome c-type biogenesis protein CcmE.